We begin with the raw amino-acid sequence, 480 residues long: Prostacyclin synthase (480 aa).

The chain crosses the membrane as a helical span at residues 1-21 (MMWTALLLVGLSILVIVLYGR). Residues Arg-104, Leu-110, Asn-277, 338-339 (TR), and Arg-362 each bind substrate. Cys-421 lines the heme pocket.

This sequence belongs to the cytochrome P450 family. Heme is required as a cofactor.

It localises to the endoplasmic reticulum membrane. It catalyses the reaction prostaglandin H2 = prostaglandin I2. The catalysed reaction is a hydroperoxyeicosatetraenoate = an oxoeicosatetraenoate + H2O. The enzyme catalyses (15S)-hydroperoxy-(5Z,8Z,11Z,13E)-eicosatetraenoate = 15-oxo-(5Z,8Z,11Z,13E)-eicosatetraenoate + H2O. It carries out the reaction (15S)-hydroperoxy-(5Z,8Z,11Z,13E)-eicosatetraenoate + AH2 = (15S)-hydroxy-(5Z,8Z,11Z,13E)-eicosatetraenoate + A + H2O. Its function is as follows. Catalyzes the isomerization of prostaglandin H2 to prostacyclin (= prostaglandin I2). Functionally, catalyzes the biosynthesis and metabolism of eicosanoids. Catalyzes the isomerization of prostaglandin H2 to prostacyclin (= prostaglandin I2), a potent mediator of vasodilation and inhibitor of platelet aggregation. Additionally, displays dehydratase activity, toward hydroperoxyeicosatetraenoates (HPETEs), especially toward (15S)-hydroperoxy-(5Z,8Z,11Z,13E)-eicosatetraenoate (15(S)-HPETE). The sequence is that of Prostacyclin synthase from Danio rerio (Zebrafish).